We begin with the raw amino-acid sequence, 181 residues long: Acireductone dioxygenase (181 aa).

4 residues coordinate Fe(2+): His97, His99, Glu103, and His141. 4 residues coordinate Ni(2+): His97, His99, Glu103, and His141.

This sequence belongs to the acireductone dioxygenase (ARD) family. In terms of assembly, monomer. It depends on Fe(2+) as a cofactor. Requires Ni(2+) as cofactor.

The enzyme catalyses 1,2-dihydroxy-5-(methylsulfanyl)pent-1-en-3-one + O2 = 3-(methylsulfanyl)propanoate + CO + formate + 2 H(+). The catalysed reaction is 1,2-dihydroxy-5-(methylsulfanyl)pent-1-en-3-one + O2 = 4-methylsulfanyl-2-oxobutanoate + formate + 2 H(+). It functions in the pathway amino-acid biosynthesis; L-methionine biosynthesis via salvage pathway; L-methionine from S-methyl-5-thio-alpha-D-ribose 1-phosphate: step 5/6. Catalyzes 2 different reactions between oxygen and the acireductone 1,2-dihydroxy-3-keto-5-methylthiopentene (DHK-MTPene) depending upon the metal bound in the active site. Fe-containing acireductone dioxygenase (Fe-ARD) produces formate and 2-keto-4-methylthiobutyrate (KMTB), the alpha-ketoacid precursor of methionine in the methionine recycle pathway. Ni-containing acireductone dioxygenase (Ni-ARD) produces methylthiopropionate, carbon monoxide and formate, and does not lie on the methionine recycle pathway. This Stutzerimonas stutzeri (strain A1501) (Pseudomonas stutzeri) protein is Acireductone dioxygenase.